We begin with the raw amino-acid sequence, 1028 residues long: Serine/threonine-protein kinase fray2 (1028 aa).

Positions 1 to 67 (MSDDKYHHDK…PKPRKNYPNS (67 aa)) are disordered. Positions 20–54 (KQSTAAALSSSSTLASSSSMTTTTTTTSTTTTAAS) are enriched in low complexity. A Protein kinase domain is found at 71 to 330 (YELKETIGKG…PSKLLEHRFF (260 aa)). Residues 77-85 (IGKGGSGLV) and Lys-100 contribute to the ATP site. Asp-195 acts as the Proton acceptor in catalysis. Position 230 is a phosphothreonine; by autocatalysis (Thr-230). Over residues 368–381 (TSSPQFDTGHSNSA) the composition is skewed to polar residues. 3 disordered regions span residues 368-467 (TSSP…STVV), 486-561 (AYHQ…LQQP), and 580-914 (DLIT…IQSK). 2 stretches are compositionally biased toward low complexity: residues 387–419 (PNEN…NNNN) and 432–458 (TPSH…SNHT). Polar residues-rich tracts occupy residues 503–518 (IPNH…SAHS) and 528–542 (IHPT…VVNN). Low complexity predominate over residues 543-561 (TQQPQTLQPPQQQHQLQQP). A compositionally biased stretch (polar residues) spans 595–616 (IPSSSSHGNIPSLVTTSPKSPL). Low complexity-rich tracts occupy residues 617–642 (QHQQ…ISSN) and 683–700 (SSRA…SHTS). Basic and acidic residues-rich tracts occupy residues 701–714 (SSDE…SDRK), 728–742 (SKRD…DRSN), 753–855 (VSRD…DRSR), and 865–893 (SRDS…DYKS).

This sequence belongs to the protein kinase superfamily. STE Ser/Thr protein kinase family. STE20 subfamily. Requires Mn(2+) as cofactor. Post-translationally, undergoes autophosphorylation in the catalytic domain.

The enzyme catalyses L-seryl-[protein] + ATP = O-phospho-L-seryl-[protein] + ADP + H(+). The catalysed reaction is L-threonyl-[protein] + ATP = O-phospho-L-threonyl-[protein] + ADP + H(+). This is Serine/threonine-protein kinase fray2 from Dictyostelium discoideum (Social amoeba).